The sequence spans 198 residues: Recombination protein RecR (198 aa).

The segment at 57–72 (CLNCGCLTDEAACYFC) adopts a C4-type zinc-finger fold. The Toprim domain occupies 80–175 (QIICVTAFPR…QISRLAFGLP (96 aa)).

The protein belongs to the RecR family.

Functionally, may play a role in DNA repair. It seems to be involved in an RecBC-independent recombinational process of DNA repair. It may act with RecF and RecO. The polypeptide is Recombination protein RecR (Protochlamydia amoebophila (strain UWE25)).